Consider the following 96-residue polypeptide: Large ribosomal subunit protein bL27 (96 aa).

The propeptide occupies 1-9 (MLRLDLQFF).

The protein belongs to the bacterial ribosomal protein bL27 family. Post-translationally, the N-terminus is cleaved by ribosomal processing cysteine protease Prp.

The protein is Large ribosomal subunit protein bL27 of Geobacillus sp. (strain WCH70).